Consider the following 372-residue polypeptide: tRNA-specific 2-thiouridylase MnmA (372 aa).

Residues 16 to 23 and M42 each bind ATP; that span reads GMSGGVDS. The interaction with target base in tRNA stretch occupies residues 102-104; that stretch reads NPD. C107 serves as the catalytic Nucleophile. A disulfide bridge connects residues C107 and C205. ATP is bound at residue G132. The segment at 155–157 is interaction with tRNA; sequence KDQ. C205 (cysteine persulfide intermediate) is an active-site residue. The tract at residues 317–318 is interaction with tRNA; it reads RY.

This sequence belongs to the MnmA/TRMU family.

It localises to the cytoplasm. It carries out the reaction S-sulfanyl-L-cysteinyl-[protein] + uridine(34) in tRNA + AH2 + ATP = 2-thiouridine(34) in tRNA + L-cysteinyl-[protein] + A + AMP + diphosphate + H(+). Catalyzes the 2-thiolation of uridine at the wobble position (U34) of tRNA, leading to the formation of s(2)U34. The chain is tRNA-specific 2-thiouridylase MnmA from Shewanella sp. (strain W3-18-1).